The sequence spans 91 residues: Large ribosomal subunit protein uL23c (91 aa).

This sequence belongs to the universal ribosomal protein uL23 family. In terms of assembly, part of the 50S ribosomal subunit.

The protein resides in the plastid. It is found in the chloroplast. Binds to 23S rRNA. This Anthoceros angustus (Hornwort) protein is Large ribosomal subunit protein uL23c (rpl23).